The sequence spans 160 residues: S-protein homolog 13 (160 aa).

The signal sequence occupies residues 1–27 (MGRDLGWCFFVATVLLAAVLLPAPTIA).

It belongs to the plant self-incompatibility (S1) protein family.

Its subcellular location is the secreted. The polypeptide is S-protein homolog 13 (Arabidopsis thaliana (Mouse-ear cress)).